The primary structure comprises 288 residues: Protease HtpX homolog (288 aa).

2 helical membrane-spanning segments follow: residues 6 to 26 and 28 to 48; these read TAFL…YVGG and QGMM…YFFS. His130 contributes to the Zn(2+) binding site. Glu131 is a catalytic residue. His134 contributes to the Zn(2+) binding site. A run of 2 helical transmembrane segments spans residues 140–160 and 179–199; these read ILTG…ANFA and VIML…QMAI. Zn(2+) is bound at residue Glu204.

Belongs to the peptidase M48B family. Zn(2+) serves as cofactor.

The protein localises to the cell inner membrane. The sequence is that of Protease HtpX homolog from Campylobacter concisus (strain 13826).